Here is a 196-residue protein sequence, read N- to C-terminus: Putative NADH dehydrogenase/NAD(P)H nitroreductase xcc-b100_0585 (196 aa).

This sequence belongs to the nitroreductase family. HadB/RutE subfamily. FMN is required as a cofactor.

The chain is Putative NADH dehydrogenase/NAD(P)H nitroreductase xcc-b100_0585 from Xanthomonas campestris pv. campestris (strain B100).